A 599-amino-acid polypeptide reads, in one-letter code: THO complex subunit 1 (599 aa).

Disordered regions lie at residues 376 to 395 and 497 to 599; these read EKQP…RRQR and KYQA…MPVS. The segment covering 502–522 has biased composition (basic and acidic residues); that stretch reads PNEKAKRAKKEETKGGSHETE. Over residues 575-585 the composition is skewed to acidic residues; sequence QIEDGETEEAG.

In terms of assembly, component of the THO complex, which is composed of THO1, THO2, THO3, THO5, THO6 and THO7.

The protein localises to the nucleus. In terms of biological role, acts as a component of the THO subcomplex of the TREX complex which is thought to couple mRNA transcription, processing and nuclear export. Contributes to the integrity of the endogenous trans-acting small interfering RNA (ta-siRNA) pathway. May process or transport a long RNA molecule so that it can be a template for secondary siRNA production. May participate in the trafficking of siRNA precursors to the ARGONAUTE catalytic center. Required for the generation of functional messenger ribonucleoproteins (mRNPs). Plays an important roles in plant innate immunity. The protein is THO complex subunit 1 (THO1) of Arabidopsis thaliana (Mouse-ear cress).